The sequence spans 204 residues: Refilin-A (204 aa).

The interval 1-52 is disordered; sequence MVGHLHLQAMGDTREQSRDGLLDSPDSGLPPSPSPSPPFYALSPGTLDTRTT. Residues 12–21 show a composition bias toward basic and acidic residues; the sequence is DTREQSRDGL. Over residues 28–38 the composition is skewed to pro residues; the sequence is GLPPSPSPSPP. Position 151 is an asymmetric dimethylarginine (Arg151).

Belongs to the Refilin family. As to quaternary structure, interacts with FLNA and FLNB. In terms of tissue distribution, detected in various tissues, with highest expression in lung, followed by spleen.

It localises to the cytoplasm. Its subcellular location is the cytoskeleton. In terms of biological role, involved in the regulation of the perinuclear actin network and nuclear shape through interaction with filamins. Plays an essential role in the formation of cartilaginous skeletal elements. This is Refilin-A (Rflna) from Mus musculus (Mouse).